We begin with the raw amino-acid sequence, 618 residues long: Beta-glucosidase C (618 aa).

Positions 1-19 are cleaved as a signal peptide; it reads MRVDSTVLALVALATDCLG. N-linked (GlcNAc...) asparagine glycosylation is found at Asn40, Asn82, Asn104, Asn211, and Asn263. Asp330 is an active-site residue. 6 N-linked (GlcNAc...) asparagine glycosylation sites follow: Asn417, Asn448, Asn477, Asn482, Asn502, and Asn517.

Belongs to the glycosyl hydrolase 3 family.

The protein localises to the secreted. The enzyme catalyses Hydrolysis of terminal, non-reducing beta-D-glucosyl residues with release of beta-D-glucose.. It functions in the pathway glycan metabolism; cellulose degradation. In terms of biological role, beta-glucosidases are one of a number of cellulolytic enzymes involved in the degradation of cellulosic biomass. Catalyzes the last step releasing glucose from the inhibitory cellobiose. The chain is Beta-glucosidase C (bglC) from Emericella nidulans (strain FGSC A4 / ATCC 38163 / CBS 112.46 / NRRL 194 / M139) (Aspergillus nidulans).